The primary structure comprises 657 residues: Tetracycline resistance protein TetQ (657 aa).

The tr-type G domain maps to 17–260 (MNIINLGILA…AISSFILPPE (244 aa)). Residues 26–33 (AHIDAGKT), 90–94 (DTPGH), and 144–147 (NKID) each bind GTP.

It belongs to the TRAFAC class translation factor GTPase superfamily. Classic translation factor GTPase family. TetM/TetO subfamily.

Abolishes the inhibitory effect of tetracycline on protein synthesis by non-covalently modifying ribosomes. Confers mild resistance to tetracycline when expressed in E.coli. The polypeptide is Tetracycline resistance protein TetQ (tetQ) (Bacteroides fragilis).